The primary structure comprises 267 residues: 3-methyl-2-oxobutanoate hydroxymethyltransferase (267 aa).

D41 and D80 together coordinate Mg(2+). 3-methyl-2-oxobutanoate-binding positions include 41–42, D80, and K109; that span reads DS. Residue E111 coordinates Mg(2+). E178 acts as the Proton acceptor in catalysis.

The protein belongs to the PanB family. Homodecamer; pentamer of dimers. Requires Mg(2+) as cofactor.

The protein resides in the cytoplasm. It catalyses the reaction 3-methyl-2-oxobutanoate + (6R)-5,10-methylene-5,6,7,8-tetrahydrofolate + H2O = 2-dehydropantoate + (6S)-5,6,7,8-tetrahydrofolate. It participates in cofactor biosynthesis; (R)-pantothenate biosynthesis; (R)-pantoate from 3-methyl-2-oxobutanoate: step 1/2. Catalyzes the reversible reaction in which hydroxymethyl group from 5,10-methylenetetrahydrofolate is transferred onto alpha-ketoisovalerate to form ketopantoate. This Kosmotoga olearia (strain ATCC BAA-1733 / DSM 21960 / TBF 19.5.1) protein is 3-methyl-2-oxobutanoate hydroxymethyltransferase.